The primary structure comprises 337 residues: MSGFYHKHFLKLLDFTPAELNSLLQLAAKLKADKKSGKEEAKLTGKNIALIFEKDSTRTRCSFEVAAYDQGARVTYLGPSGSQIGHKESIKDTARVLGRMYDGIQYRGYGQEIVETLAEYAGVPVWNGLTNEFHPTQLLADLLTMQEHLPGKAFNEMTLVYAGDARNNMGNSMLEAAALTGLDLRLVAPQACWPEAALVTECRAQAQQNGGNITLTEDVAKGVEGADFIYTDVWVSMGEAKEKWAERIALLRDYQVNSKMMQLTGNPEVKFLHCLPAFHDDQTTLGKKMAEEFGLHGGMEVTDEVFESAASIVFDQAENRMHTIKAVMVATLSKLNN.

Carbamoyl phosphate contacts are provided by residues 56-59 (STRT), Gln83, Arg107, and 134-137 (HPTQ). L-ornithine-binding positions include Asn168, Asp232, and 236 to 237 (SM). Residues 274-275 (CL) and Arg320 each bind carbamoyl phosphate.

The protein belongs to the aspartate/ornithine carbamoyltransferase superfamily. OTCase family.

It is found in the cytoplasm. The catalysed reaction is carbamoyl phosphate + L-ornithine = L-citrulline + phosphate + H(+). It participates in amino-acid biosynthesis; L-arginine biosynthesis; L-arginine from L-ornithine and carbamoyl phosphate: step 1/3. Reversibly catalyzes the transfer of the carbamoyl group from carbamoyl phosphate (CP) to the N(epsilon) atom of ornithine (ORN) to produce L-citrulline. This Shigella flexneri serotype 5b (strain 8401) protein is Ornithine carbamoyltransferase.